The following is a 275-amino-acid chain: Polyamine aminopropyltransferase (275 aa).

The region spanning His-2 to Lys-235 is the PABS domain. Gln-31 provides a ligand contact to S-methyl-5'-thioadenosine. The spermidine site is built by His-62 and Asp-86. S-methyl-5'-thioadenosine-binding positions include Glu-106 and Asp-137–Gly-138. Asp-155 functions as the Proton acceptor in the catalytic mechanism. Asp-155–Asp-158 contributes to the spermidine binding site. Residue Pro-162 coordinates S-methyl-5'-thioadenosine.

Belongs to the spermidine/spermine synthase family. Homodimer or homotetramer.

The protein resides in the cytoplasm. The enzyme catalyses S-adenosyl 3-(methylsulfanyl)propylamine + putrescine = S-methyl-5'-thioadenosine + spermidine + H(+). The protein operates within amine and polyamine biosynthesis; spermidine biosynthesis; spermidine from putrescine: step 1/1. Its function is as follows. Catalyzes the irreversible transfer of a propylamine group from the amino donor S-adenosylmethioninamine (decarboxy-AdoMet) to putrescine (1,4-diaminobutane) to yield spermidine. In Desulforudis audaxviator (strain MP104C), this protein is Polyamine aminopropyltransferase.